The chain runs to 380 residues: Cytochrome b (380 aa).

The next 4 helical transmembrane spans lie at 34–54, 78–99, 114–134, and 179–199; these read FGSL…LLAM, WLIR…YLHI, WNTG…GYVL, and FFAL…IHLT. Residues histidine 84 and histidine 98 each coordinate heme b. Heme b-binding residues include histidine 183 and histidine 197. An a ubiquinone-binding site is contributed by histidine 202. Helical transmembrane passes span 227–247, 289–309, 321–341, and 348–368; these read TKDT…ALFS, LGGV…PLLH, LSQL…WIGS, and FIII…ILFP.

It belongs to the cytochrome b family. As to quaternary structure, the cytochrome bc1 complex contains 11 subunits: 3 respiratory subunits (MT-CYB, CYC1 and UQCRFS1), 2 core proteins (UQCRC1 and UQCRC2) and 6 low-molecular weight proteins (UQCRH/QCR6, UQCRB/QCR7, UQCRQ/QCR8, UQCR10/QCR9, UQCR11/QCR10 and a cleavage product of UQCRFS1). This cytochrome bc1 complex then forms a dimer. Heme b serves as cofactor.

It localises to the mitochondrion inner membrane. Its function is as follows. Component of the ubiquinol-cytochrome c reductase complex (complex III or cytochrome b-c1 complex) that is part of the mitochondrial respiratory chain. The b-c1 complex mediates electron transfer from ubiquinol to cytochrome c. Contributes to the generation of a proton gradient across the mitochondrial membrane that is then used for ATP synthesis. The chain is Cytochrome b (MT-CYB) from Aptenodytes patagonicus (King penguin).